Consider the following 125-residue polypeptide: Napin-3 (125 aa).

Disulfide bonds link cysteine 10/cysteine 62, cysteine 23/cysteine 51, cysteine 52/cysteine 107, and cysteine 64/cysteine 115.

It belongs to the 2S seed storage albumins family. In terms of assembly, the mature protein consists of a small and a large chain linked by disulfide bonds.

Its function is as follows. The small, basic, water-soluble napins are one of the two major kinds of storage proteins synthesized in the seed during its maturation. The chain is Napin-3 from Brassica napus (Rape).